The sequence spans 321 residues: Annexin D3 (321 aa).

A2 carries the N-acetylalanine modification. Annexin repeat units lie at residues 11-82 (PSPA…SWTY), 83-159 (DPAE…TLAS), 171-243 (EVAT…VAIF), and 247-318 (TPEK…TLLG). Positions 26, 28, and 68 each coordinate Ca(2+). T117 carries the phosphothreonine modification. I260 and G264 together coordinate Ca(2+). A Phosphotyrosine modification is found at Y289. D304 lines the Ca(2+) pocket.

Belongs to the annexin (TC 1.A.31.1) family. In terms of tissue distribution, expressed mainly in roots and flowers. Lower in stems and leaves.

The chain is Annexin D3 (ANN3) from Arabidopsis thaliana (Mouse-ear cress).